The sequence spans 96 residues: Large ribosomal subunit protein eL14 (96 aa).

This sequence belongs to the eukaryotic ribosomal protein eL14 family.

This is Large ribosomal subunit protein eL14 from Sulfolobus acidocaldarius (strain ATCC 33909 / DSM 639 / JCM 8929 / NBRC 15157 / NCIMB 11770).